The sequence spans 115 residues: Large ribosomal subunit protein bL19 (115 aa).

Belongs to the bacterial ribosomal protein bL19 family.

In terms of biological role, this protein is located at the 30S-50S ribosomal subunit interface and may play a role in the structure and function of the aminoacyl-tRNA binding site. The chain is Large ribosomal subunit protein bL19 from Streptococcus gordonii (strain Challis / ATCC 35105 / BCRC 15272 / CH1 / DL1 / V288).